The chain runs to 787 residues: Ribonucleoside-diphosphate reductase large subunit (787 aa).

Substrate contacts are provided by residues Thr209, 224 to 225, Gly255, 436 to 440, and 618 to 622; these read SC, NLCTE, and PTVSS. Cys225 and Cys453 are disulfide-bonded. Asn436 (proton acceptor) is an active-site residue. Cys438 serves as the catalytic Cysteine radical intermediate. Glu440 acts as the Proton acceptor in catalysis.

It belongs to the ribonucleoside diphosphate reductase large chain family. As to quaternary structure, heterotetramer composed of a homodimer of the large subunit (R1) and a homodimer of the small subunit (R2). Larger multisubunit protein complex are also active, composed of (R1)n(R2)n.

The catalysed reaction is a 2'-deoxyribonucleoside 5'-diphosphate + [thioredoxin]-disulfide + H2O = a ribonucleoside 5'-diphosphate + [thioredoxin]-dithiol. Ribonucleoside-diphosphate reductase holoenzyme provides the precursors necessary for viral DNA synthesis. Allows virus growth in non-dividing cells, as well as reactivation from latency in infected hosts. Catalyzes the biosynthesis of deoxyribonucleotides from the corresponding ribonucleotides. The polypeptide is Ribonucleoside-diphosphate reductase large subunit (Bos taurus (Bovine)).